The sequence spans 342 residues: Lumican (342 aa).

Positions 1 to 18 (MNLGVFPLLLALIGGASS) are cleaved as a signal peptide. Sulfotyrosine is present on residues Y20, Y23, and Y34. In terms of domain architecture, LRRNT spans 32-70 (ALYGRSSPNCAPECNCPESYPSAMYCDELKLKSVPMVPP). LRR repeat units follow at residues 71 to 92 (GIKY…AFEN), 95 to 118 (DLQW…VFSK), 121 to 141 (QLKK…PLPK), 142 to 163 (SLVD…DGLV), 164 to 185 (NLTF…AALK), 189 to 209 (SLEY…GLPV), 210 to 231 (SLLT…YFKR), and 234 to 254 (ALQY…PGNS). Residue N92 is glycosylated (N-linked (GlcNAc...) (keratan sulfate) asparagine). The N-linked (GlcNAc...) (keratan sulfate) asparagine glycan is linked to N131. A glycan (N-linked (GlcNAc...) (keratan sulfate) asparagine) is linked at N164. A glycan (N-linked (GlcNAc...) (keratan sulfate) asparagine) is linked at N256. 2 LRR repeats span residues 259 to 280 (SLLE…NENL) and 281 to 300 (ENYY…SFCK). Cysteines 299 and 332 form a disulfide. The residue at position 308 (S308) is a Phosphoserine. The LRR 11 repeat unit spans residues 309 to 330 (KIKHLRLDGNHITQTSLPPDMY).

It belongs to the small leucine-rich proteoglycan (SLRP) family. SLRP class II subfamily. As to quaternary structure, binds to laminin. In terms of processing, sulfated on tyrosine residue(s). Contains keratan sulfate. Cornea and other tissues.

The protein resides in the secreted. Its subcellular location is the extracellular space. It localises to the extracellular matrix. This chain is Lumican (LUM), found in Bos taurus (Bovine).